The following is an 84-amino-acid chain: CDC42 small effector protein 2 (84 aa).

2 S-palmitoyl cysteine lipidation sites follow: C10 and C11. The CRIB domain occupies I29–G42. 2 positions are modified to phosphoserine: S43 and S52.

The protein belongs to the CDC42SE/SPEC family. Interacts with CDC42 (in GTP-bound form). Interacts weakly with RAC1 and not at all with RHOA.

The protein resides in the cytoplasm. The protein localises to the cytoskeleton. Its subcellular location is the cell membrane. It localises to the cell projection. It is found in the phagocytic cup. Probably involved in the organization of the actin cytoskeleton by acting downstream of CDC42, inducing actin filament assembly. Alters CDC42-induced cell shape changes. In activated T-cells, may play a role in CDC42-mediated F-actin accumulation at the immunological synapse. May play a role in early contractile events in phagocytosis in macrophages. In Pongo abelii (Sumatran orangutan), this protein is CDC42 small effector protein 2 (CDC42SE2).